The following is an 84-amino-acid chain: uncharacterized protein (84 aa).

The next 2 helical transmembrane spans lie at 7-27 and 52-72; these read HVNF…ILCI and ITII…INPC.

The protein resides in the membrane. This is an uncharacterized protein from Saccharomyces cerevisiae (strain ATCC 204508 / S288c) (Baker's yeast).